The chain runs to 385 residues: UPF0284 protein PMM0439 (385 aa).

It belongs to the UPF0284 family.

This chain is UPF0284 protein PMM0439, found in Prochlorococcus marinus subsp. pastoris (strain CCMP1986 / NIES-2087 / MED4).